The following is a 384-amino-acid chain: MSTNTSKTLELFSKKTVQEHNTANDCWVTYQNRKIYDVTRFLSEHPGGDESILDYAGKDITEIMKDSDVHEHSDSAYEILEDEYLIGYLATDEEAARLLTNKNHKVEVQLSADGTEFDSTTFVKELPAEEKLSIATDYSNDYKKHKFLDLNRPLLMQILRSDFKKDFYVDQIHRPRHYGKGSAPLFGNFLEPLTKTAWWVVPVAWLPVVVYHMGVALKNMNQLFACFLFCVGVFVWTLIEYGLHRFLFHFDDWLPESNIAFATHFLLHGCHHYLPMDKYRLVMPPTLFVILCAPFYKLVFALLPLYWAYAGFAGGLFGYVCYDECHFFLHHSKLPPFMRKLKKYHLEHHYKNYQLGFGVTSWFWDEVFGTYLGPDAPLSKMKYE.

Residues 1–197 (MSTNTSKTLE…NFLEPLTKTA (197 aa)) are Cytoplasmic-facing. The 82-residue stretch at 9–90 (LELFSKKTVQ…EDEYLIGYLA (82 aa)) folds into the Cytochrome b5 heme-binding domain. Residues His45 and His72 each coordinate heme. A helical transmembrane segment spans residues 198-216 (WWVVPVAWLPVVVYHMGVA). The Lumenal segment spans residues 217–221 (LKNMN). The helical transmembrane segment at 222–246 (QLFACFLFCVGVFVWTLIEYGLHRF) threads the bilayer. Zn(2+) is bound by residues His244, His249, His268, His271, and His272. Over 247 to 284 (LFHFDDWLPESNIAFATHFLLHGCHHYLPMDKYRLVMP) the chain is Cytoplasmic. The chain crosses the membrane as a helical span at residues 285-302 (PTLFVILCAPFYKLVFAL). The Lumenal portion of the chain corresponds to 303–304 (LP). A helical transmembrane segment spans residues 305 to 328 (LYWAYAGFAGGLFGYVCYDECHFF). Residues His326, His330, His345, His348, and His349 each coordinate Zn(2+). Residues 329-384 (LHHSKLPPFMRKLKKYHLEHHYKNYQLGFGVTSWFWDEVFGTYLGPDAPLSKMKYE) are Cytoplasmic-facing.

Belongs to the sterol desaturase family. SCS7 subfamily. Zn(2+) serves as cofactor.

The protein resides in the endoplasmic reticulum membrane. The enzyme catalyses an N-(1,2 saturated acyl)-(4R)-hydroxysphinganine + 2 Fe(II)-[cytochrome b5] + O2 + 2 H(+) = an N-(2R-hydroxyacyl)-4R-hydroxysphinganine + 2 Fe(III)-[cytochrome b5] + H2O. It carries out the reaction an N-(1,2-saturated acyl)sphinganine + 2 Fe(II)-[cytochrome b5] + O2 + 2 H(+) = an N-[(2'R)-hydroxyacyl]sphinganine + 2 Fe(III)-[cytochrome b5] + H2O. The catalysed reaction is N-hexacosanoyl-(4R)-hydroxysphinganine + 2 Fe(II)-[cytochrome b5] + O2 + 2 H(+) = N-(2-hydroxyhexacosanyl)-(4R)-hydroxysphinganine + 2 Fe(III)-[cytochrome b5] + H2O. Its pathway is sphingolipid metabolism. In terms of biological role, ceramide hydroxylase involved in the hydroxylation of sphingolipid-associated very long chain fatty acids. Postulated to hydroxylate the very long chain fatty acid of dihydroceramides and phytoceramides at C-2. This chain is Ceramide very long chain fatty acid hydroxylase SCS7, found in Saccharomyces cerevisiae (strain ATCC 204508 / S288c) (Baker's yeast).